Here is an 84-residue protein sequence, read N- to C-terminus: Small ribosomal subunit protein bS16 (84 aa).

This sequence belongs to the bacterial ribosomal protein bS16 family.

This chain is Small ribosomal subunit protein bS16, found in Burkholderia ambifaria (strain MC40-6).